Reading from the N-terminus, the 786-residue chain is Leucine-rich repeat extensin-like protein 2 (786 aa).

An N-terminal signal peptide occupies residues 1 to 28; it reads MLLFPSTSLRLFFFLFLLFSSCFLQIRG. Residues asparagine 73 and asparagine 79 are each glycosylated (N-linked (GlcNAc...) asparagine). LRR repeat units lie at residues 100 to 124, 125 to 147, 149 to 172, 173 to 196, 198 to 219, 221 to 243, 244 to 267, 268 to 291, and 292 to 315; these read TRVV…LGLL, TDLA…TFKH, KLLF…VLSL, PSLK…LFDK, LDAI…MGNS, VSAL…GLMG, KTLN…IGNL, KNVT…IGNM, and KSLE…ICQL. 2 N-linked (GlcNAc...) asparagine glycosylation sites follow: asparagine 255 and asparagine 269. Asparagine 320 and asparagine 346 each carry an N-linked (GlcNAc...) asparagine glycan. 4 disordered regions span residues 352–372, 390–589, 624–645, and 694–786; these read IDGK…SRSV, FKMS…YYAV, PPVY…YYPP, and PPPS…IPYY. Residues 353-362 are compositionally biased toward basic and acidic residues; the sequence is DGKEDQRSSK. The contains the Ser-Pro(4) repeats stretch occupies residues 384 to 786; it reads SPPPPSFKMS…SPPPPSIPYY (403 aa). 3 stretches are compositionally biased toward pro residues: residues 460–477, 487–542, and 566–589; these read YPPP…PPPS, YPPP…PPPK, and SPPP…YYAV. 4 stretches are compositionally biased toward pro residues: residues 694-713, 720-737, 752-769, and 777-786; these read PPPS…PPST, PASP…PPPK, PTPP…PLPP, and SPPPPSIPYY.

Post-translationally, hydroxylated on proline residues in the S-P-P-P-P repeat. In terms of processing, O-glycosylated on hydroxyprolines. Mostly expressed in roots, also present in stems at low levels. In roots, confined to differentiation zones, the collet, and meristematic cells of tips.

Its subcellular location is the secreted. The protein localises to the cell wall. In terms of biological role, modulates cell morphogenesis by regulating cell wall formation and assembly, and/or growth polarization. Together with LRX2, component of the extracellular mechanism regulating root hair morphogenesis and elongation. The chain is Leucine-rich repeat extensin-like protein 2 (LRX2) from Arabidopsis thaliana (Mouse-ear cress).